The sequence spans 103 residues: Translation initiation factor 1A (103 aa).

In terms of domain architecture, S1-like spans 11 to 86; it reads TRVRTPRENE…EKCDVIWRYT (76 aa).

It belongs to the eIF-1A family.

Functionally, seems to be required for maximal rate of protein biosynthesis. Enhances ribosome dissociation into subunits and stabilizes the binding of the initiator Met-tRNA(I) to 40 S ribosomal subunits. The sequence is that of Translation initiation factor 1A (eIF1A) from Methanococcus maripaludis (strain C5 / ATCC BAA-1333).